The following is a 337-amino-acid chain: tRNA N6-adenosine threonylcarbamoyltransferase (337 aa).

H111 and H115 together coordinate Fe cation. Substrate contacts are provided by residues 134–138 (LVSGG), D167, G180, and N272. Residue D300 coordinates Fe cation.

It belongs to the KAE1 / TsaD family. It depends on Fe(2+) as a cofactor.

Its subcellular location is the cytoplasm. It carries out the reaction L-threonylcarbamoyladenylate + adenosine(37) in tRNA = N(6)-L-threonylcarbamoyladenosine(37) in tRNA + AMP + H(+). Required for the formation of a threonylcarbamoyl group on adenosine at position 37 (t(6)A37) in tRNAs that read codons beginning with adenine. Is involved in the transfer of the threonylcarbamoyl moiety of threonylcarbamoyl-AMP (TC-AMP) to the N6 group of A37, together with TsaE and TsaB. TsaD likely plays a direct catalytic role in this reaction. The protein is tRNA N6-adenosine threonylcarbamoyltransferase of Salmonella choleraesuis (strain SC-B67).